The sequence spans 661 residues: Cyclic di-GMP phosphodiesterase PdeR (661 aa).

One can recognise a PAS domain in the interval 109 to 179; the sequence is GLSFAEQVVS…RRNNRVFFRS (71 aa). Residues 265-397 form the GGDEF domain; sequence NKVGVVYLDL…GRGQFCVFTP (133 aa). An EAL domain is found at 406–658; the sequence is YLWLDTNLRK…AFERWYKRYL (253 aa).

In terms of assembly, interacts with DgcM and MlrA.

The enzyme catalyses 3',3'-c-di-GMP + H2O = 5'-phosphoguanylyl(3'-&gt;5')guanosine + H(+). Its function is as follows. Part of a signaling cascade that regulates curli biosynthesis. The cascade is composed of two cyclic-di-GMP (c-di-GMP) control modules, in which c-di-GMP controlled by the DgcE/PdeH pair (module I) regulates the activity of the DgcM/PdeR pair (module II), which in turn regulates activity of the transcription factor MlrA and expression of the master biofilm regulator csgD. PdeR acts as a trigger enzyme that connects modules I and II. It inhibits DgcM and MlrA by direct interaction. Inhibition is relieved when PdeR binds and degrades c-di-GMP generated by module I. The protein is Cyclic di-GMP phosphodiesterase PdeR of Escherichia coli (strain K12).